Reading from the N-terminus, the 198-residue chain is 7-methyl-GTP pyrophosphatase (198 aa).

The active-site Proton acceptor is aspartate 75.

Belongs to the Maf family. YceF subfamily. A divalent metal cation serves as cofactor.

The protein resides in the cytoplasm. It carries out the reaction N(7)-methyl-GTP + H2O = N(7)-methyl-GMP + diphosphate + H(+). Functionally, nucleoside triphosphate pyrophosphatase that hydrolyzes 7-methyl-GTP (m(7)GTP). May have a dual role in cell division arrest and in preventing the incorporation of modified nucleotides into cellular nucleic acids. This Bartonella quintana (strain Toulouse) (Rochalimaea quintana) protein is 7-methyl-GTP pyrophosphatase.